A 298-amino-acid polypeptide reads, in one-letter code: Max-like protein X (298 aa).

A disordered region spans residues methionine 1–histidine 63. The residue at position 7 (serine 7) is a Phosphoserine. The segment covering glycine 28 to glycine 37 has biased composition (basic residues). 5 positions are modified to phosphoserine: serine 45, serine 48, serine 74, serine 77, and serine 98. Residues serine 91–isoleucine 145 form a disordered region. Residues serine 94–asparagine 109 show a composition bias toward polar residues. 2 stretches are compositionally biased toward basic and acidic residues: residues aspartate 116–lysine 127 and threonine 135–isoleucine 145. The bHLH domain occupies arginine 129–leucine 187. Residues lysine 140–glutamine 160 form a leucine-zipper region.

Efficient DNA binding requires dimerization with another bHLH protein. Binds DNA as a heterodimer with MAD1, MAD4, MNT, WBSCR14 and MLXIP. Can also bind DNA as a homodimer. As to expression, expressed in all tissues tested, including spleen, thymus, prostate, ovary, intestine, colon, peripheral blood leukocyte, heart, liver, skeletal muscle and kidney. Lower levels of expression in testis, brain, placenta and lung.

The protein localises to the cytoplasm. Its subcellular location is the nucleus. Functionally, transcription regulator. Forms a sequence-specific DNA-binding protein complex with MAD1, MAD4, MNT, WBSCR14 and MLXIP which recognizes the core sequence 5'-CACGTG-3'. The TCFL4-MAD1, TCFL4-MAD4, TCFL4-WBSCR14 complexes are transcriptional repressors. Plays a role in transcriptional activation of glycolytic target genes. Involved in glucose-responsive gene regulation. This is Max-like protein X (MLX) from Homo sapiens (Human).